Reading from the N-terminus, the 291-residue chain is 29 kDa ribonucleoprotein B, chloroplastic (291 aa).

The 79-residue stretch at 87–165 folds into the RRM 1 domain; the sequence is LKLFVGNLPF…RAIRVNAGPA (79 aa). Residues 164-202 form a disordered region; that stretch reads PAPAKRENSSFGGGRGGNSSYGGGRDGNSSFGGARGGRS. Residues 166 to 206 form a linker (Gly-rich) region; the sequence is PAKRENSSFGGGRGGNSSYGGGRDGNSSFGGARGGRSVDSS. Positions 174-189 are enriched in gly residues; the sequence is FGGGRGGNSSYGGGRD. Positions 207 to 285 constitute an RRM 2 domain; the sequence is NRVYVGNLSW…RSIRVSAAEE (79 aa).

Its subcellular location is the plastid. It is found in the chloroplast. Functionally, could be involved in splicing and/or processing of chloroplast RNA's. The sequence is that of 29 kDa ribonucleoprotein B, chloroplastic from Nicotiana sylvestris (Wood tobacco).